A 194-amino-acid chain; its full sequence is Imidazoleglycerol-phosphate dehydratase (194 aa).

This sequence belongs to the imidazoleglycerol-phosphate dehydratase family.

Its subcellular location is the cytoplasm. The enzyme catalyses D-erythro-1-(imidazol-4-yl)glycerol 3-phosphate = 3-(imidazol-4-yl)-2-oxopropyl phosphate + H2O. It participates in amino-acid biosynthesis; L-histidine biosynthesis; L-histidine from 5-phospho-alpha-D-ribose 1-diphosphate: step 6/9. This is Imidazoleglycerol-phosphate dehydratase from Thermus thermophilus (strain ATCC 27634 / DSM 579 / HB8).